We begin with the raw amino-acid sequence, 376 residues long: Putative F-box/FBD/LRR-repeat protein At5g52460 (376 aa).

One can recognise an F-box domain in the interval 16–75 (RDEISSLPDDLLIQILLLVPIKDAVGTMILSKRWRYVWTLLPKLEYSDPGDECESVWKFL). LRR repeat units lie at residues 131–154 (CKTLVELTLSDKIIVDVPSSVCLP) and 199–224 (FAKVHKLRLEKPHIDVVCHTDDKFLK). In terms of domain architecture, FBD spans 296 to 348 (CHGTNQGTVPRCLSAHLDEEFVWHGYRGNEEETQLIRYIFANAKCLKKREIST).

This is Putative F-box/FBD/LRR-repeat protein At5g52460 (EDA41) from Arabidopsis thaliana (Mouse-ear cress).